Here is a 542-residue protein sequence, read N- to C-terminus: N-substituted formamide deformylase (542 aa).

Residues 1 to 2 (MT) constitute a propeptide that is removed on maturation.

In terms of assembly, homodimer. Requires Zn(2+) as cofactor.

The catalysed reaction is N-benzylformamide + H2O = benzylamine + formate. Its activity is regulated as follows. Completely inhibited by HgCl(2), CuCl, CuCl(2) and AgNO(3). Partially inhibited by ZnCl(2) and SnCl(2). Almost completely inhibited by the reducing reagent DTT. Partially inhibited by phenylhydrazine. Moderately inhibited by phenanthroline and 8-hydroxyquinoline. Completely inhibited by the thiol-specific inhibitors N-ethylmaleimide and p-chloromercuribenzoate. Not inhibited by the carbonyl-specific inhibitors aminoguanidine and semicarbazide, the chelating agents alpha,alpha'-dipyridyl, KCN, diethyldithiocarbamate and EDTA, or the oxidizing reagents and serine-modifying reagents such as H(2)O(2), ammonium persulfate, phenylmethanesulfonyl fluoride and diisopropyl fluorophosphates. Its function is as follows. Hydrolyzes N-substituted formamides, but not amides. N-benzylformamide is the preferred substrate, while N-butylformamide is hydrolyzed at a much lower rate. Has very low activity towards allylformamide, N-(2-cyclohex-1-enylethyl)formamide and N-(alpha-methylbenzyl)formamide. This is N-substituted formamide deformylase from Arthrobacter pascens.